The chain runs to 261 residues: ATP synthase subunit a (261 aa).

Helical transmembrane passes span 31 to 51 (IAFT…LIFM), 64 to 84 (WQAA…TNIG), 97 to 117 (LFMF…VVGV), 126 to 146 (LTVT…VGFW), 166 to 188 (IPMI…GLRL), 201 to 223 (VLAG…VSIP), and 235 to 255 (ELLV…LYLN).

The protein belongs to the ATPase A chain family. In terms of assembly, F-type ATPases have 2 components, CF(1) - the catalytic core - and CF(0) - the membrane proton channel. CF(1) has five subunits: alpha(3), beta(3), gamma(1), delta(1), epsilon(1). CF(0) has three main subunits: a(1), b(2) and c(9-12). The alpha and beta chains form an alternating ring which encloses part of the gamma chain. CF(1) is attached to CF(0) by a central stalk formed by the gamma and epsilon chains, while a peripheral stalk is formed by the delta and b chains.

It localises to the cell inner membrane. Key component of the proton channel; it plays a direct role in the translocation of protons across the membrane. This chain is ATP synthase subunit a, found in Rhizorhabdus wittichii (strain DSM 6014 / CCUG 31198 / JCM 15750 / NBRC 105917 / EY 4224 / RW1) (Sphingomonas wittichii).